The chain runs to 355 residues: Nuclear hormone receptor family member nhr-127 (355 aa).

Positions 10-86 form a DNA-binding region, nuclear receptor; it reads SIPCEVCKNQ…AGMKAEKIQK (77 aa). 2 NR C4-type zinc fingers span residues 13–33 and 49–69; these read CEVC…CGAC and CKDG…CRYC. Positions 126 to 355 constitute an NR LBD domain; it reads NPHNASEGCS…IVQIVQNNFY (230 aa).

It belongs to the nuclear hormone receptor family.

Its subcellular location is the nucleus. Its function is as follows. Orphan nuclear receptor. May play a role in modulation of lifespan and immunity. The chain is Nuclear hormone receptor family member nhr-127 (nhr-127) from Caenorhabditis elegans.